Reading from the N-terminus, the 1155-residue chain is DNA-directed RNA polymerase subunit beta (1155 aa).

It belongs to the RNA polymerase beta chain family. The RNAP catalytic core consists of 2 alpha, 1 beta, 1 beta' and 1 omega subunit. When a sigma factor is associated with the core the holoenzyme is formed, which can initiate transcription.

The catalysed reaction is RNA(n) + a ribonucleoside 5'-triphosphate = RNA(n+1) + diphosphate. DNA-dependent RNA polymerase catalyzes the transcription of DNA into RNA using the four ribonucleoside triphosphates as substrates. The polypeptide is DNA-directed RNA polymerase subunit beta (Borrelia turicatae (strain 91E135)).